A 192-amino-acid chain; its full sequence is uncharacterized protein (192 aa).

The N-terminal stretch at 1-17 (MFKKILFPLVALFMLAG) is a signal peptide. C18 is lipidated: N-palmitoyl cysteine. C18 is lipidated: S-diacylglycerol cysteine.

The protein to H.influenzae HI_0162.

It is found in the cell membrane. This is an uncharacterized protein from Escherichia coli O6:H1 (strain CFT073 / ATCC 700928 / UPEC).